A 200-amino-acid polypeptide reads, in one-letter code: Large ribosomal subunit protein uL13 (200 aa).

It belongs to the universal ribosomal protein uL13 family. In terms of assembly, component of the large ribosomal subunit. Mature ribosomes consist of a small (40S) and a large (60S) subunit. The 40S subunit contains about 32 different proteins and 1 molecule of RNA (18S). The 60S subunit contains 45 different proteins and 3 molecules of RNA (25S, 5.8S and 5S).

It is found in the cytoplasm. In terms of biological role, component of the ribosome, a large ribonucleoprotein complex responsible for the synthesis of proteins in the cell. The small ribosomal subunit (SSU) binds messenger RNAs (mRNAs) and translates the encoded message by selecting cognate aminoacyl-transfer RNA (tRNA) molecules. The large subunit (LSU) contains the ribosomal catalytic site termed the peptidyl transferase center (PTC), which catalyzes the formation of peptide bonds, thereby polymerizing the amino acids delivered by tRNAs into a polypeptide chain. The nascent polypeptides leave the ribosome through a tunnel in the LSU and interact with protein factors that function in enzymatic processing, targeting, and the membrane insertion of nascent chains at the exit of the ribosomal tunnel. This chain is Large ribosomal subunit protein uL13, found in Candida albicans (strain SC5314 / ATCC MYA-2876) (Yeast).